The sequence spans 199 residues: Shikimate kinase (199 aa).

Position 32–37 (32–37 (GSGKTS)) interacts with ATP. Thr36 contacts Mg(2+). The substrate site is built by Asp54, Arg78, and Gly100. Position 138 (Arg138) interacts with ATP. Residue Arg157 coordinates substrate.

Belongs to the shikimate kinase family. In terms of assembly, monomer. The cofactor is Mg(2+).

Its subcellular location is the cytoplasm. The enzyme catalyses shikimate + ATP = 3-phosphoshikimate + ADP + H(+). The protein operates within metabolic intermediate biosynthesis; chorismate biosynthesis; chorismate from D-erythrose 4-phosphate and phosphoenolpyruvate: step 5/7. Catalyzes the specific phosphorylation of the 3-hydroxyl group of shikimic acid using ATP as a cosubstrate. In Synechococcus sp. (strain CC9605), this protein is Shikimate kinase.